The chain runs to 493 residues: MALRLYDTLTKEKRAFAPIDPSNVRMYVCGPTVYDFAHIGNARPVIVFDVLFRLLRHLYGENHVTYVRNITDVDDKINDRAARDYPGLPLNEAIRKVTEQTERQFHDDVDALGCLRPTVEPRATEHIGEMRTIIDRLVAGGFAYVAADHVLFSPAAMNAANSVLPRYGALANRSLDEMIAGARVDVAPYKRDATDFVLWKPSKPGEPSWPSPAGITMEGRPGWHIECSAMSWKHLGETFDIHGGGIDLVFPHHENEVAQSCCAFQTDRMAQTWMHNGFLQVEGEKMSKSLGNFITIRELLATEKFGGDSWVGEILRFAMIKTHYRSPIDWTVKALDEGHKVLWDWYRDIGDVGPAQQLPGEFIDCLADDLNISSAIAFMHSLRKDKKFAELLATMNFLGFSNAESVLARRPVGVRINLPPAHAEAAVGTVEVLAKPLSKSEIEERIDARTAARARKDFKESDRIRDELAAMGIAIKDGKDADGKPVTTWEIAR.

Cys29 contributes to the Zn(2+) binding site. A 'HIGH' region motif is present at residues 31-41; it reads PTVYDFAHIGN. Zn(2+)-binding residues include Cys227, His252, and Glu256. The 'KMSKS' region signature appears at 285–289; the sequence is KMSKS. Lys288 contacts ATP.

Belongs to the class-I aminoacyl-tRNA synthetase family. In terms of assembly, monomer. Requires Zn(2+) as cofactor.

The protein localises to the cytoplasm. The enzyme catalyses tRNA(Cys) + L-cysteine + ATP = L-cysteinyl-tRNA(Cys) + AMP + diphosphate. The sequence is that of Cysteine--tRNA ligase from Rhodopseudomonas palustris (strain HaA2).